Here is an 802-residue protein sequence, read N- to C-terminus: Bifunctional purine biosynthetic protein ADE5,7 (802 aa).

The segment at 1–450 (MLNILVLGNG…QNSESSKVAI (450 aa)) is GARS. One can recognise an ATP-grasp domain in the interval 114 to 330 (KRFMSKHNIP…LAQVFLAAAE (217 aa)). 141–203 (QAHTDKAFVI…EQFLEGDEIS (63 aa)) contacts ATP. The Mg(2+) site is built by glutamate 298 and asparagine 300. The tract at residues 451–802 (TYADSGVSVD…CVIENGTKLY (352 aa)) is AIRS. Phosphoserine is present on residues serine 455 and serine 458.

The protein in the N-terminal section; belongs to the GARS family. This sequence in the C-terminal section; belongs to the AIR synthase family. Mg(2+) serves as cofactor. The cofactor is Mn(2+).

It is found in the cytoplasm. It catalyses the reaction 5-phospho-beta-D-ribosylamine + glycine + ATP = N(1)-(5-phospho-beta-D-ribosyl)glycinamide + ADP + phosphate + H(+). The enzyme catalyses 2-formamido-N(1)-(5-O-phospho-beta-D-ribosyl)acetamidine + ATP = 5-amino-1-(5-phospho-beta-D-ribosyl)imidazole + ADP + phosphate + H(+). Its pathway is purine metabolism; IMP biosynthesis via de novo pathway; 5-amino-1-(5-phospho-D-ribosyl)imidazole from N(2)-formyl-N(1)-(5-phospho-D-ribosyl)glycinamide: step 2/2. The protein operates within purine metabolism; IMP biosynthesis via de novo pathway; N(1)-(5-phospho-D-ribosyl)glycinamide from 5-phospho-alpha-D-ribose 1-diphosphate: step 2/2. Functionally, catalyzes the second and fifth step in the 'de novo' purine biosynthesis pathway; contains phosphoribosylamine--glycine ligase (GARS) and phosphoribosylformylglycinamidine cyclo-ligase (AIRS) activities. This chain is Bifunctional purine biosynthetic protein ADE5,7, found in Saccharomyces cerevisiae (strain ATCC 204508 / S288c) (Baker's yeast).